Reading from the N-terminus, the 618-residue chain is tRNA endonuclease vms-1 (618 aa).

The segment at 59–85 (DQCTTCNCPVDFGDRAVLLEHYQSLFH) adopts a C2H2-type zinc-finger fold. The 142-residue stretch at 170 to 311 (RPFDCAIFLW…SDCWQRLQQV (142 aa)) folds into the VLRF1 domain. Gln-213 is a catalytic residue. ANK repeat units follow at residues 437 to 466 (NRST…CDSS) and 470 to 496 (GAGL…VKNE). The interval 502 to 539 (ARTHIPEPKKKVELTEEQEREQAERKKEKKARQKEKEK) is disordered. The span at 505-515 (HIPEPKKKVEL) shows a compositional bias: basic and acidic residues. The stretch at 510–557 (KKKVELTEEQEREQAERKKEKKARQKEKEKLKKEIAKRDVEEMEERQK) forms a coiled coil.

It belongs to the ANKZF1/VMS1 family. In larval stages and in adults, expressed in intestinal cells, specific neurons in the head and the tail, and in the ventral nerve cord.

The protein localises to the cytoplasm. It localises to the mitochondrion. Functionally, endonuclease that cleaves polypeptidyl-tRNAs downstream of the ribosome-associated quality control (RQC) pathway to release incompletely synthesized polypeptides for degradation. The RQC pathway disassembles aberrantly stalled translation complexes to recycle or degrade the constituent parts. Dispensable for viability and growth but is required for protection against oxidative stress and for wild-type life span. This is tRNA endonuclease vms-1 (vms-1) from Caenorhabditis elegans.